The following is a 436-amino-acid chain: APO protein 1, chloroplastic (436 aa).

Residues 1 to 47 (MLLVSPACRGVYLQTIDPKPIDFSARASYALCFQIPTSIPKRECLMR) constitute a chloroplast transit peptide. APO domains are found at residues 155–240 (ACSE…EIPE) and 329–414 (ACGY…RVPQ).

The protein belongs to the APO family. In terms of tissue distribution, expressed at low level. Expressed at higher level in leaves. Expressed at lower level in roots, stems, siliques and flowers.

It localises to the plastid. The protein localises to the chloroplast. Its function is as follows. Involved in the stable assembly of several 4Fe-4S cluster-containing complexes of chloroplasts. May participate in 4Fe-4S cofactor incorporation into psaA and/or psaB during translation. The sequence is that of APO protein 1, chloroplastic (APO1) from Arabidopsis thaliana (Mouse-ear cress).